The primary structure comprises 391 residues: MVTQNKKILIITGSFGNGHMQVTQSIVNQLNEMNLNHLSVIQHDLFMEAHPIMTSICKKWYINSFKYFRNTYKRFYYSRPNELDKCFYKYYGLNKLINLLIKEKPDLILLTFPTPVMSVLTEQFNINIPIATVMTDYRMHKNWITPYSQRYYVATKDTKDDFIEAGVPASYIKVTGIPIADKFEESIDKEEWLSQQHLDPSKPTILMSAGAFGVSKGFDYMINNILEKSPNSQVVMICGRSKELKRSLKAKFKDNPSVIILGYTNHMNEWMASSQLMITKPGGITISEGLSRCIPMIFLNPAPGQELENAYYFESKGFGKIADTPNEAIDIVSDLTNNEETLKVMSSKMLESKVGYSTRKICKDLLDLIGHSSQPDEIYGKVPLYARFFVK.

This sequence belongs to the glycosyltransferase 28 family. UgtP subfamily.

It localises to the cell membrane. It catalyses the reaction a 1,2-diacyl-3-O-(beta-D-glucopyranosyl)-sn-glycerol + UDP-alpha-D-glucose = a 1,2-diacyl-3-O-(beta-D-Glc-(1-&gt;6)-beta-D-Glc)-sn-glycerol + UDP + H(+). It carries out the reaction a 1,2-diacyl-sn-glycerol + UDP-alpha-D-glucose = a 1,2-diacyl-3-O-(beta-D-glucopyranosyl)-sn-glycerol + UDP + H(+). The protein operates within glycolipid metabolism; diglucosyl-diacylglycerol biosynthesis. Processive glucosyltransferase involved in the biosynthesis of both the bilayer- and non-bilayer-forming membrane glucolipids. Is able to successively transfer two glucosyl residues to diacylglycerol (DAG), thereby catalyzing the formation of beta-monoglucosyl-DAG (3-O-(beta-D-glucopyranosyl)-1,2-diacyl-sn-glycerol) and beta-diglucosyl-DAG (3-O-(beta-D-glucopyranosyl-beta-(1-&gt;6)-D-glucopyranosyl)-1,2-diacyl-sn-glycerol). Beta-diglucosyl-DAG is the predominant glycolipid found in Bacillales and is also used as a membrane anchor for lipoteichoic acid (LTA). This Staphylococcus epidermidis (strain ATCC 35984 / DSM 28319 / BCRC 17069 / CCUG 31568 / BM 3577 / RP62A) protein is Processive diacylglycerol beta-glucosyltransferase.